The chain runs to 101 residues: Small ribosomal subunit protein uS14 (101 aa).

This sequence belongs to the universal ribosomal protein uS14 family. As to quaternary structure, part of the 30S ribosomal subunit. Contacts proteins S3 and S10.

Binds 16S rRNA, required for the assembly of 30S particles and may also be responsible for determining the conformation of the 16S rRNA at the A site. In Colwellia psychrerythraea (strain 34H / ATCC BAA-681) (Vibrio psychroerythus), this protein is Small ribosomal subunit protein uS14.